The sequence spans 148 residues: uncharacterized protein (148 aa).

This is an uncharacterized protein from Bacillus subtilis (Bacteriophage SP01).